The primary structure comprises 300 residues: Phosphatidylserine decarboxylase proenzyme (300 aa).

Catalysis depends on charge relay system; for autoendoproteolytic cleavage activity residues Asp-117, His-173, and Ser-260. Ser-260 functions as the Schiff-base intermediate with substrate; via pyruvic acid; for decarboxylase activity in the catalytic mechanism. Ser-260 is subject to Pyruvic acid (Ser); by autocatalysis.

This sequence belongs to the phosphatidylserine decarboxylase family. PSD-B subfamily. Prokaryotic type II sub-subfamily. As to quaternary structure, heterodimer of a large membrane-associated beta subunit and a small pyruvoyl-containing alpha subunit. It depends on pyruvate as a cofactor. In terms of processing, is synthesized initially as an inactive proenzyme. Formation of the active enzyme involves a self-maturation process in which the active site pyruvoyl group is generated from an internal serine residue via an autocatalytic post-translational modification. Two non-identical subunits are generated from the proenzyme in this reaction, and the pyruvate is formed at the N-terminus of the alpha chain, which is derived from the carboxyl end of the proenzyme. The autoendoproteolytic cleavage occurs by a canonical serine protease mechanism, in which the side chain hydroxyl group of the serine supplies its oxygen atom to form the C-terminus of the beta chain, while the remainder of the serine residue undergoes an oxidative deamination to produce ammonia and the pyruvoyl prosthetic group on the alpha chain. During this reaction, the Ser that is part of the protease active site of the proenzyme becomes the pyruvoyl prosthetic group, which constitutes an essential element of the active site of the mature decarboxylase.

It localises to the cell membrane. It catalyses the reaction a 1,2-diacyl-sn-glycero-3-phospho-L-serine + H(+) = a 1,2-diacyl-sn-glycero-3-phosphoethanolamine + CO2. It functions in the pathway phospholipid metabolism; phosphatidylethanolamine biosynthesis; phosphatidylethanolamine from CDP-diacylglycerol: step 2/2. Its function is as follows. Catalyzes the formation of phosphatidylethanolamine (PtdEtn) from phosphatidylserine (PtdSer). In Fusobacterium nucleatum subsp. nucleatum (strain ATCC 25586 / DSM 15643 / BCRC 10681 / CIP 101130 / JCM 8532 / KCTC 2640 / LMG 13131 / VPI 4355), this protein is Phosphatidylserine decarboxylase proenzyme.